We begin with the raw amino-acid sequence, 713 residues long: Putative ERAD-associated E3 ubiquitin-protein ligase component (713 aa).

A signal peptide spans 1 to 20 (MQLLNFLICLFFIFKRCVFT). Residues N48 and N123 are each glycosylated (N-linked (GlcNAc...) asparagine). Sel1-like repeat units lie at residues 83-124 (PESQ…TQNY) and 125-160 (TYAL…HQIS). N211 carries an N-linked (GlcNAc...) asparagine glycan. 4 Sel1-like repeats span residues 212-248 (ISAH…RLVN), 280-315 (SIAA…SLNH), 490-525 (IHSL…AIHP), and 527-562 (ALAY…MHDT). N-linked (GlcNAc...) asparagine glycosylation is present at N314. The segment at 621-655 (QLPPEPPTLQVDRTPQQPDPQETSESLPSPNTEEM) is disordered. Over residues 631–652 (VDRTPQQPDPQETSESLPSPNT) the composition is skewed to polar residues. Residues 671–691 (GRFLETACVTLIVVVVGLVLM) traverse the membrane as a helical segment.

This sequence belongs to the sel-1 family.

The protein localises to the endoplasmic reticulum membrane. In terms of biological role, component of the endoplasmic reticulum quality control (ERQC) system involved in ubiquitin-dependent degradation of missfolded endoplasmic reticulum proteins. The chain is Putative ERAD-associated E3 ubiquitin-protein ligase component from Schizosaccharomyces pombe (strain 972 / ATCC 24843) (Fission yeast).